The sequence spans 564 residues: Proline--tRNA ligase (564 aa).

It belongs to the class-II aminoacyl-tRNA synthetase family. ProS type 1 subfamily. As to quaternary structure, homodimer.

It localises to the cytoplasm. It carries out the reaction tRNA(Pro) + L-proline + ATP = L-prolyl-tRNA(Pro) + AMP + diphosphate. Catalyzes the attachment of proline to tRNA(Pro) in a two-step reaction: proline is first activated by ATP to form Pro-AMP and then transferred to the acceptor end of tRNA(Pro). As ProRS can inadvertently accommodate and process non-cognate amino acids such as alanine and cysteine, to avoid such errors it has two additional distinct editing activities against alanine. One activity is designated as 'pretransfer' editing and involves the tRNA(Pro)-independent hydrolysis of activated Ala-AMP. The other activity is designated 'posttransfer' editing and involves deacylation of mischarged Ala-tRNA(Pro). The misacylated Cys-tRNA(Pro) is not edited by ProRS. This chain is Proline--tRNA ligase, found in Xanthomonas campestris pv. campestris (strain 8004).